The primary structure comprises 155 residues: Endoribonuclease YbeY (155 aa).

Residues His-113, His-117, and His-123 each contribute to the Zn(2+) site.

Belongs to the endoribonuclease YbeY family. It depends on Zn(2+) as a cofactor.

Its subcellular location is the cytoplasm. Its function is as follows. Single strand-specific metallo-endoribonuclease involved in late-stage 70S ribosome quality control and in maturation of the 3' terminus of the 16S rRNA. This chain is Endoribonuclease YbeY, found in Ureaplasma parvum serovar 3 (strain ATCC 27815 / 27 / NCTC 11736).